Here is a 540-residue protein sequence, read N- to C-terminus: Kinesin light chain (540 aa).

The stretch at 34–138 (LETSVKGVKE…NKHLKYMASI (105 aa)) forms a coiled coil. TPR repeat units follow at residues 206–239 (LRTLHNLVIQYASQGRYEVAVPLCKQALEDLEKT), 248–281 (ATMLNILALVYRDQNKYKEAANLLNEALSIREKC), 290–323 (AATLNNLAVLFGKRGKFKDAEPLCKRALEIREKV), 332–365 (AKQLNNLALLCQNQGKYEEVEKYYKRALEIYESK), 374–407 (AKTKNNLSSAYLKQGKYKEAEELYKQILTRAHER), and 456–489 (TTTLKNLGALYRRQGKYEAAETLEDVALRAKKQH).

Belongs to the kinesin light chain family. In terms of assembly, oligomeric complex composed of two heavy chains and two light chains. Interacts with unc-83; the interaction is direct. Interacts with unc-33; the interaction regulates unc-33 neurite localization. Interacts with casy-1.

Its subcellular location is the cytoplasm. It is found in the cytoskeleton. It localises to the nucleus envelope. Functionally, kinesin is a microtubule-associated force-producing protein that may play a role in organelle transport. The light chain may function in coupling of cargo to the heavy chain or in the modulation of its ATPase activity. Recruits unc-83 (within the unc-83-unc-84 LINC complex) to the nuclear envelope during nuclear migration to mediate the link between the nuclear envelope and the microtubule cytoskeleton in hypodermal precursor cells. This is Kinesin light chain from Caenorhabditis elegans.